We begin with the raw amino-acid sequence, 188 residues long: ATP synthase subunit b, chloroplastic (188 aa).

The helical transmembrane segment at 35–57 threads the bilayer; it reads LINLAVVIGVLVYFGKGVLTTLL.

It belongs to the ATPase B chain family. In terms of assembly, F-type ATPases have 2 components, F(1) - the catalytic core - and F(0) - the membrane proton channel. F(1) has five subunits: alpha(3), beta(3), gamma(1), delta(1), epsilon(1). F(0) has four main subunits: a(1), b(1), b'(1) and c(10-14). The alpha and beta chains form an alternating ring which encloses part of the gamma chain. F(1) is attached to F(0) by a central stalk formed by the gamma and epsilon chains, while a peripheral stalk is formed by the delta, b and b' chains.

The protein resides in the plastid. It localises to the chloroplast thylakoid membrane. F(1)F(0) ATP synthase produces ATP from ADP in the presence of a proton or sodium gradient. F-type ATPases consist of two structural domains, F(1) containing the extramembraneous catalytic core and F(0) containing the membrane proton channel, linked together by a central stalk and a peripheral stalk. During catalysis, ATP synthesis in the catalytic domain of F(1) is coupled via a rotary mechanism of the central stalk subunits to proton translocation. Its function is as follows. Component of the F(0) channel, it forms part of the peripheral stalk, linking F(1) to F(0). This is ATP synthase subunit b, chloroplastic from Zygnema circumcarinatum (Green alga).